The chain runs to 104 residues: Pterin-4-alpha-carbinolamine dehydratase (104 aa).

Ala-2 is subject to N-acetylalanine. Substrate is bound by residues 61–63 and 78–81; these read DHH and STHD.

The protein belongs to the pterin-4-alpha-carbinolamine dehydratase family. Homotetramer and homodimer.

It is found in the cytoplasm. It localises to the nucleus. The catalysed reaction is (4aS,6R)-4a-hydroxy-L-erythro-5,6,7,8-tetrahydrobiopterin = (6R)-L-erythro-6,7-dihydrobiopterin + H2O. Involved in tetrahydrobiopterin biosynthesis. Seems to both prevent the formation of 7-pterins and accelerate the formation of quinonoid-BH2. Coactivator for HNF1A-dependent transcription. Regulates the dimerization of homeodomain protein HNF1A and enhances its transcriptional activity. Also acts as a coactivator for HNF1B-dependent transcription. The polypeptide is Pterin-4-alpha-carbinolamine dehydratase (pcbd) (Xenopus laevis (African clawed frog)).